The primary structure comprises 231 residues: RNA pyrophosphohydrolase (231 aa).

A Nudix hydrolase domain is found at 6–149; it reads GFRPNVGIIL…KRDVYQLALT (144 aa). A Nudix box motif is present at residues 38-59; it reads GGIKYGETPVQAMYRELHEETG. Residues 157–190 form a disordered region; that stretch reads RPQPRTERPGGHHHGQRYPRMASSVNAPPGASMA.

It belongs to the Nudix hydrolase family. RppH subfamily. A divalent metal cation serves as cofactor.

Accelerates the degradation of transcripts by removing pyrophosphate from the 5'-end of triphosphorylated RNA, leading to a more labile monophosphorylated state that can stimulate subsequent ribonuclease cleavage. This is RNA pyrophosphohydrolase from Paraburkholderia phymatum (strain DSM 17167 / CIP 108236 / LMG 21445 / STM815) (Burkholderia phymatum).